The primary structure comprises 85 residues: Putative membrane protein insertion efficiency factor (85 aa).

The protein belongs to the UPF0161 family.

It localises to the cell inner membrane. In terms of biological role, could be involved in insertion of integral membrane proteins into the membrane. The protein is Putative membrane protein insertion efficiency factor of Vibrio cholerae serotype O1 (strain ATCC 39315 / El Tor Inaba N16961).